We begin with the raw amino-acid sequence, 223 residues long: Uracil phosphoribosyltransferase (223 aa).

Residues R86, R111, and D145–T153 each bind 5-phospho-alpha-D-ribose 1-diphosphate. Residues I209 and G214–A216 contribute to the uracil site. D215 lines the 5-phospho-alpha-D-ribose 1-diphosphate pocket.

The protein belongs to the UPRTase family. It depends on Mg(2+) as a cofactor.

It carries out the reaction UMP + diphosphate = 5-phospho-alpha-D-ribose 1-diphosphate + uracil. It functions in the pathway pyrimidine metabolism; UMP biosynthesis via salvage pathway; UMP from uracil: step 1/1. Its activity is regulated as follows. Allosterically activated by GTP. In terms of biological role, catalyzes the conversion of uracil and 5-phospho-alpha-D-ribose 1-diphosphate (PRPP) to UMP and diphosphate. This is Uracil phosphoribosyltransferase from Natronomonas pharaonis (strain ATCC 35678 / DSM 2160 / CIP 103997 / JCM 8858 / NBRC 14720 / NCIMB 2260 / Gabara) (Halobacterium pharaonis).